The sequence spans 264 residues: TLC domain-containing protein 4-B (264 aa).

A run of 6 helical transmembrane segments spans residues 6 to 26 (VYVV…VSPV), 50 to 70 (LVST…LWYD), 84 to 104 (LVKL…LLLA), 110 to 130 (MGDV…GYVL), 169 to 189 (LVVA…IAVM), and 210 to 230 (LAIQ…NIIW). A TLC domain is found at 41 to 243 (NKLNDWNSRL…IARGCYKVIT (203 aa)).

Belongs to the TLCD4 family.

The protein resides in the membrane. The chain is TLC domain-containing protein 4-B (tlcd4b) from Danio rerio (Zebrafish).